A 422-amino-acid chain; its full sequence is Glycine amidinotransferase, mitochondrial (422 aa).

The transit peptide at 1–37 (MLRVRCLRGGSRGAEAAHFIGSRLGRAFTGWVQRSLQ) directs the protein to the mitochondrion. Residues Asp-253 and His-302 contribute to the active site. Cys-406 acts as the Amidino-cysteine intermediate in catalysis. At Thr-416 the chain carries Phosphothreonine.

This sequence belongs to the amidinotransferase family. In terms of assembly, homodimer.

The protein resides in the mitochondrion inner membrane. The catalysed reaction is L-arginine + glycine = guanidinoacetate + L-ornithine. The protein operates within amine and polyamine biosynthesis; creatine biosynthesis; creatine from L-arginine and glycine: step 1/2. Its function is as follows. Catalyzes the biosynthesis of guanidinoacetate, the immediate precursor of creatine. Creatine plays a vital role in energy metabolism in muscle tissues. May play a role in embryonic and central nervous system development. The protein is Glycine amidinotransferase, mitochondrial of Gallus gallus (Chicken).